We begin with the raw amino-acid sequence, 369 residues long: Mannose-1-phosphate guanylyltransferase catalytic subunit beta (369 aa).

The substrate-binding domain stretch occupies residues 12–231 (RALILVGGYG…TGFWMDIGQP (220 aa)). Position 120 (Asp120) interacts with GDP-alpha-D-mannose. Asp120 contacts Mg(2+). Lys171 is an active-site residue. Asp227 contributes to the GDP-alpha-D-mannose binding site. A Mg(2+)-binding site is contributed by Asp227. The tract at residues 254–369 (YTGPGVVGNV…ASVPEPQIIM (116 aa)) is hexapeptide repeat domain.

Belongs to the transferase hexapeptide repeat family. As to quaternary structure, component of the GMPPA-GMPPB mannose-1-phosphate guanylyltransferase complex composed of 4 Gmppa subunits and 8 Gmppb subunits; the complex is organized into three layers, a central layer made up of 2 Gmppa dimers sandwiched between two layers each made up of 2 Gmppb dimers. Gmppb catalytic activity is reduced when part of the complex and binding of GDP-alpha-D-Mannose by Gmppa induces allosteric feedback inhibition of Gmppb. Mg(2+) is required as a cofactor.

The catalysed reaction is alpha-D-mannose 1-phosphate + GTP + H(+) = GDP-alpha-D-mannose + diphosphate. It functions in the pathway nucleotide-sugar biosynthesis; GDP-alpha-D-mannose biosynthesis; GDP-alpha-D-mannose from alpha-D-mannose 1-phosphate (GTP route): step 1/1. Enzyme activity is reduced by incorporation into the GMPPA-GMPPB mannose-1-phosphate guanylyltransferase complex. Allosterically inhibited, when part of the GMPPA-GMPPB complex, by GDP-alpha-D-mannose binding to Gmppa. Functionally, catalytic subunit of the GMPPA-GMPPB mannose-1-phosphate guanylyltransferase complex. Catalyzes the formation of GDP-mannose, an essential precursor of glycan moieties of glycoproteins and glycolipids. Can catalyze the reverse reaction in vitro. Together with GMPPA regulates GDP-alpha-D-mannose levels. This chain is Mannose-1-phosphate guanylyltransferase catalytic subunit beta, found in Drosophila melanogaster (Fruit fly).